Here is a 113-residue protein sequence, read N- to C-terminus: Iron-sulfur cluster insertion protein ErpA (113 aa).

Iron-sulfur cluster contacts are provided by Cys41, Cys105, and Cys107.

The protein belongs to the HesB/IscA family. As to quaternary structure, homodimer. Iron-sulfur cluster serves as cofactor.

In terms of biological role, required for insertion of 4Fe-4S clusters for at least IspG. The sequence is that of Iron-sulfur cluster insertion protein ErpA from Aliivibrio fischeri (strain ATCC 700601 / ES114) (Vibrio fischeri).